The chain runs to 240 residues: 6-phosphogluconolactonase (240 aa).

The protein belongs to the glucosamine/galactosamine-6-phosphate isomerase family. 6-phosphogluconolactonase subfamily.

It catalyses the reaction 6-phospho-D-glucono-1,5-lactone + H2O = 6-phospho-D-gluconate + H(+). It functions in the pathway carbohydrate degradation; pentose phosphate pathway; D-ribulose 5-phosphate from D-glucose 6-phosphate (oxidative stage): step 2/3. Functionally, hydrolysis of 6-phosphogluconolactone to 6-phosphogluconate. This chain is 6-phosphogluconolactonase (pgl), found in Synechocystis sp. (strain ATCC 27184 / PCC 6803 / Kazusa).